A 46-amino-acid polypeptide reads, in one-letter code: Lantibiotic streptin (46 aa).

Residues 1–24 constitute a propeptide that is removed on maturation; that stretch reads MNNTIKDFDLDLKTNKKDTATPYV.

The protein belongs to the type A lantibiotic family. Post-translationally, maturation of lantibiotics involves the enzymatic conversion of Thr, and Ser into dehydrated AA and the formation of thioether bonds with cysteine. This is followed by membrane translocation and cleavage of the modified precursor.

Lanthionine-containing peptide antibiotic (lantibiotic) active on certain Gram-positive bacteria. The bactericidal activity of lantibiotics is based on depolarization of energized bacterial cytoplasmic membranes, initiated by the formation of aqueous transmembrane pores. This chain is Lantibiotic streptin (srtA), found in Streptococcus pyogenes serotype M1.